Consider the following 420-residue polypeptide: 3-phosphoshikimate 1-carboxyvinyltransferase (420 aa).

The 3-phosphoshikimate site is built by Lys-26, Ser-27, and Arg-31. Lys-26 is a binding site for phosphoenolpyruvate. Residues Gly-97 and Arg-125 each contribute to the phosphoenolpyruvate site. Ser-170, Ser-171, Gln-172, Asp-297, Asn-320, and Lys-324 together coordinate 3-phosphoshikimate. Gln-172 lines the phosphoenolpyruvate pocket. The active-site Proton acceptor is Asp-297. 3 residues coordinate phosphoenolpyruvate: Arg-328, Arg-375, and Lys-400.

This sequence belongs to the EPSP synthase family. In terms of assembly, monomer.

Its subcellular location is the cytoplasm. It catalyses the reaction 3-phosphoshikimate + phosphoenolpyruvate = 5-O-(1-carboxyvinyl)-3-phosphoshikimate + phosphate. It functions in the pathway metabolic intermediate biosynthesis; chorismate biosynthesis; chorismate from D-erythrose 4-phosphate and phosphoenolpyruvate: step 6/7. In terms of biological role, catalyzes the transfer of the enolpyruvyl moiety of phosphoenolpyruvate (PEP) to the 5-hydroxyl of shikimate-3-phosphate (S3P) to produce enolpyruvyl shikimate-3-phosphate and inorganic phosphate. The polypeptide is 3-phosphoshikimate 1-carboxyvinyltransferase (Rhizobium etli (strain ATCC 51251 / DSM 11541 / JCM 21823 / NBRC 15573 / CFN 42)).